The chain runs to 412 residues: Multifunctional CCA protein (412 aa).

Residues G8 and R11 each contribute to the ATP site. Positions 8 and 11 each coordinate CTP. The Mg(2+) site is built by D21 and D23. 3 residues coordinate ATP: R91, R137, and R140. R91, R137, and R140 together coordinate CTP. Residues 228-329 enclose the HD domain; it reads TGIHTLMTLS…VKLFDSIDAW (102 aa).

This sequence belongs to the tRNA nucleotidyltransferase/poly(A) polymerase family. Bacterial CCA-adding enzyme type 1 subfamily. In terms of assembly, monomer. Can also form homodimers and oligomers. It depends on Mg(2+) as a cofactor. Ni(2+) is required as a cofactor.

The catalysed reaction is a tRNA precursor + 2 CTP + ATP = a tRNA with a 3' CCA end + 3 diphosphate. The enzyme catalyses a tRNA with a 3' CCA end + 2 CTP + ATP = a tRNA with a 3' CCACCA end + 3 diphosphate. Catalyzes the addition and repair of the essential 3'-terminal CCA sequence in tRNAs without using a nucleic acid template. Adds these three nucleotides in the order of C, C, and A to the tRNA nucleotide-73, using CTP and ATP as substrates and producing inorganic pyrophosphate. tRNA 3'-terminal CCA addition is required both for tRNA processing and repair. Also involved in tRNA surveillance by mediating tandem CCA addition to generate a CCACCA at the 3' terminus of unstable tRNAs. While stable tRNAs receive only 3'-terminal CCA, unstable tRNAs are marked with CCACCA and rapidly degraded. This chain is Multifunctional CCA protein, found in Escherichia coli (strain SE11).